The chain runs to 400 residues: Putative transposase for insertion sequence element IS5376 (400 aa).

Residues 5-67 (GEFFMIKEMY…PFKPYLQKRM (63 aa)) form the HTH IS21-type domain. The H-T-H motif DNA-binding region spans 20–39 (ISDIARELGIDRKTVRKYIH). A disordered region spans residues 35-55 (RKYIHSPNPPSKSKRKQRKSK). The 175-residue stretch at 113–287 (YETLPGEQMQ…SPQERWAEES (175 aa)) folds into the Integrase catalytic domain.

This sequence belongs to the transposase IS21/IS408/IS1162 family.

Involved in the transposition of the insertion sequence. This is Putative transposase for insertion sequence element IS5376 from Geobacillus stearothermophilus (Bacillus stearothermophilus).